Consider the following 325-residue polypeptide: NADH-quinone oxidoreductase subunit H (325 aa).

A run of 9 helical transmembrane segments spans residues 11-31 (ILLS…CGAF), 50-69 (NRVG…KMFF), 81-101 (VIFT…FAIV), 114-134 (IGIL…LFAG), 154-174 (VSYE…AGSF), 186-206 (LWNV…GVAV), 237-257 (FFVG…TLFF), 265-285 (LPPF…FILI), and 304-324 (VCLP…LWQA).

This sequence belongs to the complex I subunit 1 family. As to quaternary structure, NDH-1 is composed of 13 different subunits. Subunits NuoA, H, J, K, L, M, N constitute the membrane sector of the complex.

Its subcellular location is the cell inner membrane. The enzyme catalyses a quinone + NADH + 5 H(+)(in) = a quinol + NAD(+) + 4 H(+)(out). Its function is as follows. NDH-1 shuttles electrons from NADH, via FMN and iron-sulfur (Fe-S) centers, to quinones in the respiratory chain. The immediate electron acceptor for the enzyme in this species is believed to be ubiquinone. Couples the redox reaction to proton translocation (for every two electrons transferred, four hydrogen ions are translocated across the cytoplasmic membrane), and thus conserves the redox energy in a proton gradient. This subunit may bind ubiquinone. The sequence is that of NADH-quinone oxidoreductase subunit H from Salmonella arizonae (strain ATCC BAA-731 / CDC346-86 / RSK2980).